The chain runs to 226 residues: Gap junction beta-2 protein (226 aa).

An intramembrane segment occupies 2-13; it reads DWGTLQTILGGV. Residues 14–20 lie on the Cytoplasmic side of the membrane; sequence NKHSTSI. Residues 21 to 40 form a helical membrane-spanning segment; that stretch reads GKIWLTVLFIFRIMILVVAA. The Extracellular segment spans residues 41 to 73; it reads KEVWGDEQADFVCNTLQPGCKNVCYDHYFPISH. Ca(2+) is bound by residues Glu42, Gly45, and Glu47. Disulfide bonds link Cys53–Cys180, Cys60–Cys174, and Cys64–Cys169. A helical transmembrane segment spans residues 74 to 94; that stretch reads IRLWALQLIFVSTPALLVAMH. At 95–135 the chain is on the cytoplasmic side; it reads VAYRRHEKKRKFIKGEIKSEFKDIEEIKTQKVRIEGSLWWT. A helical membrane pass occupies residues 136–156; the sequence is YTSSIFFRVIFEAAFMYVFYV. The Extracellular segment spans residues 157 to 189; the sequence is MYDGFSMQRLVKCNAWPCPNTVDCFVSRPTEKT. A helical membrane pass occupies residues 190–210; sequence VFTVFMIAVSGICILLNVTEL. At 211 to 226 the chain is on the cytoplasmic side; the sequence is CYLLIRYCSGKSKKPV.

It belongs to the connexin family. Beta-type (group I) subfamily. As to quaternary structure, a hemichannel or connexon is composed of a hexamer of connexins. A functional gap junction is formed by the apposition of two hemichannels. Forms heteromeric channels with GJB4. Interacts with CNST.

It is found in the cell membrane. It localises to the cell junction. The protein resides in the gap junction. Functionally, structural component of gap junctions. Gap junctions are dodecameric channels that connect the cytoplasm of adjoining cells. They are formed by the docking of two hexameric hemichannels, one from each cell membrane. Small molecules and ions diffuse from one cell to a neighboring cell via the central pore. This Gorilla gorilla gorilla (Western lowland gorilla) protein is Gap junction beta-2 protein (GJB2).